The chain runs to 289 residues: Xyloglucan endotransglucosylase/hydrolase protein 15 (289 aa).

Positions 1-25 (MGPSSSLTTIVATVLLVTLFGSAYA) are cleaved as a signal peptide. Residues 26-216 (SNFFDEFDLT…WSKAPFTAYY (191 aa)) enclose the GH16 domain. Glutamate 102 serves as the catalytic Nucleophile. Residue glutamate 106 is the Proton donor of the active site. Residue glutamate 106 participates in xyloglucan binding. An N-linked (GlcNAc...) asparagine glycan is attached at asparagine 110. Xyloglucan is bound by residues 119-121 (HTN), 129-131 (DRE), 195-196 (DW), and glycine 200. 2 disulfides stabilise this stretch: cysteine 224/cysteine 230 and cysteine 270/cysteine 284. Arginine 275 contacts xyloglucan.

Belongs to the glycosyl hydrolase 16 family. XTH group 2 subfamily. Contains at least one intrachain disulfide bond essential for its enzymatic activity. In terms of tissue distribution, strongly expressed in roots, hypocotyls and cotyledons. Aslo detected in inflorescence stems and in the carpels and styles in flowers.

It is found in the secreted. The protein localises to the cell wall. The protein resides in the extracellular space. It localises to the apoplast. It catalyses the reaction breaks a beta-(1-&gt;4) bond in the backbone of a xyloglucan and transfers the xyloglucanyl segment on to O-4 of the non-reducing terminal glucose residue of an acceptor, which can be a xyloglucan or an oligosaccharide of xyloglucan.. It carries out the reaction xyloglucan + H2O = xyloglucan oligosaccharides.. Functionally, catalyzes xyloglucan endohydrolysis (XEH) and/or endotransglycosylation (XET). Cleaves and religates xyloglucan polymers, an essential constituent of the primary cell wall, and thereby participates in cell wall construction of growing tissues. Has a high XET activity, but little or no XEH activity in vitro. Acceptor preferences are XXXGol &gt; XLLGol = XLFGol &gt; XXLGol &gt; XXFGol. The sequence is that of Xyloglucan endotransglucosylase/hydrolase protein 15 from Arabidopsis thaliana (Mouse-ear cress).